The chain runs to 200 residues: Large ribosomal subunit protein uL4 (200 aa).

The disordered stretch occupies residues 44–70; sequence AQKTRAEVTGSGKKPWRQKGTGRARSG.

This sequence belongs to the universal ribosomal protein uL4 family. In terms of assembly, part of the 50S ribosomal subunit.

Its function is as follows. One of the primary rRNA binding proteins, this protein initially binds near the 5'-end of the 23S rRNA. It is important during the early stages of 50S assembly. It makes multiple contacts with different domains of the 23S rRNA in the assembled 50S subunit and ribosome. Functionally, protein L4 is a both a transcriptional repressor and a translational repressor protein. It regulates transcription of the S10 operon (to which L4 belongs) by causing premature termination of transcription within the S10 leader. L4 controls the translation of the S10 operon by binding to its mRNA. In terms of biological role, this protein when expressed in E.coli represses both transcription and translation of the endogenous S10 operon. As the M.morganii S10 leader can be regulated in vitro by the E.coli L4 protein this strongly suggests the endogenous protein controls its own S10 operon in a similar fashion. Forms part of the polypeptide exit tunnel. The polypeptide is Large ribosomal subunit protein uL4 (rplD) (Morganella morganii (Proteus morganii)).